The primary structure comprises 347 residues: Lipoyl synthase (347 aa).

Residues Cys55, Cys60, Cys66, Cys81, Cys85, Cys88, and Ser292 each coordinate [4Fe-4S] cluster. Positions 67–281 constitute a Radical SAM core domain; it reads WEDREATFLI…RDYGHDIGFA (215 aa).

It belongs to the radical SAM superfamily. Lipoyl synthase family. It depends on [4Fe-4S] cluster as a cofactor.

Its subcellular location is the cytoplasm. It carries out the reaction [[Fe-S] cluster scaffold protein carrying a second [4Fe-4S](2+) cluster] + N(6)-octanoyl-L-lysyl-[protein] + 2 oxidized [2Fe-2S]-[ferredoxin] + 2 S-adenosyl-L-methionine + 4 H(+) = [[Fe-S] cluster scaffold protein] + N(6)-[(R)-dihydrolipoyl]-L-lysyl-[protein] + 4 Fe(3+) + 2 hydrogen sulfide + 2 5'-deoxyadenosine + 2 L-methionine + 2 reduced [2Fe-2S]-[ferredoxin]. It functions in the pathway protein modification; protein lipoylation via endogenous pathway; protein N(6)-(lipoyl)lysine from octanoyl-[acyl-carrier-protein]: step 2/2. Its function is as follows. Catalyzes the radical-mediated insertion of two sulfur atoms into the C-6 and C-8 positions of the octanoyl moiety bound to the lipoyl domains of lipoate-dependent enzymes, thereby converting the octanoylated domains into lipoylated derivatives. This is Lipoyl synthase from Corynebacterium kroppenstedtii (strain DSM 44385 / JCM 11950 / CIP 105744 / CCUG 35717).